Here is a 219-residue protein sequence, read N- to C-terminus: 2,3-bisphosphoglycerate-dependent phosphoglycerate mutase 2 (219 aa).

Residues 8 to 15 (RHGQSIWN), 21 to 22 (TG), R58, 85 to 88 (ERHY), K96, 112 to 113 (RR), and 156 to 157 (GN) contribute to the substrate site. Residue H9 is the Tele-phosphohistidine intermediate of the active site. The active-site Proton donor/acceptor is the E85.

The protein belongs to the phosphoglycerate mutase family. BPG-dependent PGAM subfamily.

It catalyses the reaction (2R)-2-phosphoglycerate = (2R)-3-phosphoglycerate. It functions in the pathway carbohydrate degradation; glycolysis; pyruvate from D-glyceraldehyde 3-phosphate: step 3/5. In terms of biological role, catalyzes the interconversion of 2-phosphoglycerate and 3-phosphoglycerate. The sequence is that of 2,3-bisphosphoglycerate-dependent phosphoglycerate mutase 2 from Gloeobacter violaceus (strain ATCC 29082 / PCC 7421).